The chain runs to 192 residues: Probable protein adenylyltransferase y4lH (192 aa).

The Fido domain occupies 52-190 (LDFAHYRALH…LAPLAAEIRR (139 aa)). Residues 82-83 (KG) and 139-141 (GNG) contribute to the ATP site.

The protein belongs to the fic family.

The catalysed reaction is L-tyrosyl-[protein] + ATP = O-(5'-adenylyl)-L-tyrosyl-[protein] + diphosphate. It catalyses the reaction L-threonyl-[protein] + ATP = 3-O-(5'-adenylyl)-L-threonyl-[protein] + diphosphate. Probable adenylyltransferase that mediates the addition of adenosine 5'-monophosphate (AMP) to specific residues of target proteins. The protein is Probable protein adenylyltransferase y4lH of Sinorhizobium fredii (strain NBRC 101917 / NGR234).